Consider the following 415-residue polypeptide: Serine hydroxymethyltransferase (415 aa).

Residues Leu121 and 125-127 contribute to the (6S)-5,6,7,8-tetrahydrofolate site; that span reads GHL. Position 230 is an N6-(pyridoxal phosphate)lysine (Lys230). (6S)-5,6,7,8-tetrahydrofolate-binding positions include Glu246 and 354 to 356; that span reads SPF.

It belongs to the SHMT family. In terms of assembly, homodimer. It depends on pyridoxal 5'-phosphate as a cofactor.

The protein localises to the cytoplasm. The enzyme catalyses (6R)-5,10-methylene-5,6,7,8-tetrahydrofolate + glycine + H2O = (6S)-5,6,7,8-tetrahydrofolate + L-serine. The protein operates within one-carbon metabolism; tetrahydrofolate interconversion. It participates in amino-acid biosynthesis; glycine biosynthesis; glycine from L-serine: step 1/1. Catalyzes the reversible interconversion of serine and glycine with tetrahydrofolate (THF) serving as the one-carbon carrier. This reaction serves as the major source of one-carbon groups required for the biosynthesis of purines, thymidylate, methionine, and other important biomolecules. Also exhibits THF-independent aldolase activity toward beta-hydroxyamino acids, producing glycine and aldehydes, via a retro-aldol mechanism. This Bdellovibrio bacteriovorus (strain ATCC 15356 / DSM 50701 / NCIMB 9529 / HD100) protein is Serine hydroxymethyltransferase.